The chain runs to 379 residues: tRNA(Met) cytidine acetate ligase (379 aa).

Residues 7–20 (ITEY…HQYH), G100, N153, and R178 each bind ATP.

The protein belongs to the TmcAL family.

It is found in the cytoplasm. The catalysed reaction is cytidine(34) in elongator tRNA(Met) + acetate + ATP = N(4)-acetylcytidine(34) in elongator tRNA(Met) + AMP + diphosphate. In terms of biological role, catalyzes the formation of N(4)-acetylcytidine (ac(4)C) at the wobble position of elongator tRNA(Met), using acetate and ATP as substrates. First activates an acetate ion to form acetyladenylate (Ac-AMP) and then transfers the acetyl group to tRNA to form ac(4)C34. This is tRNA(Met) cytidine acetate ligase from Staphylococcus aureus (strain MRSA252).